Reading from the N-terminus, the 531-residue chain is Ribosomal protein uS12 methylthiotransferase RimO (531 aa).

Composition is skewed to polar residues over residues 1 to 19 and 55 to 67; these read MPNI…SQPA and HNQN…SSEV. Positions 1–77 are disordered; the sequence is MPNISTESVN…VSAASAKTTT (77 aa). A compositionally biased stretch (low complexity) spans 68–77; that stretch reads VSAASAKTTT. Positions 88 to 198 constitute an MTTase N-terminal domain; it reads PKIGFVSLGC…VIRAVALHVP (111 aa). [4Fe-4S] cluster is bound by residues Cys97, Cys133, Cys162, Cys236, Cys240, and Cys243. The 238-residue stretch at 222–459 folds into the Radical SAM core domain; sequence LTPSHYAYLK…MTLQQDISAQ (238 aa). The 70-residue stretch at 462-531 folds into the TRAM domain; the sequence is QEKIGKTLMV…EYDLFASYKG (70 aa).

It belongs to the methylthiotransferase family. RimO subfamily. It depends on [4Fe-4S] cluster as a cofactor.

Its subcellular location is the cytoplasm. The enzyme catalyses L-aspartate(89)-[ribosomal protein uS12]-hydrogen + (sulfur carrier)-SH + AH2 + 2 S-adenosyl-L-methionine = 3-methylsulfanyl-L-aspartate(89)-[ribosomal protein uS12]-hydrogen + (sulfur carrier)-H + 5'-deoxyadenosine + L-methionine + A + S-adenosyl-L-homocysteine + 2 H(+). Catalyzes the methylthiolation of an aspartic acid residue of ribosomal protein uS12. The chain is Ribosomal protein uS12 methylthiotransferase RimO from Psychrobacter cryohalolentis (strain ATCC BAA-1226 / DSM 17306 / VKM B-2378 / K5).